Here is a 902-residue protein sequence, read N- to C-terminus: Gamma-tubulin complex component 2 (902 aa).

Phosphotyrosine is present on Tyr83. The disordered stretch occupies residues Glu875–Gln902.

The protein belongs to the TUBGCP family. As to quaternary structure, component of the gamma-tubulin ring complex (gTuRC) consisting of TUBGCP2, TUBGCP3, TUBGCP4, TUBGCP5 and TUBGCP6 and gamma-tubulin TUBG1 or TUBG2. TUBGCP2, TUBGCP3, TUBGCP4, TUBGCP5 and TUBGCP6 assemble in a 5:5:2:1:1 stoichiometry; each is associated with a gamma-tubulin, thereby arranging 14 gamma-tubulins in a helical manner. Gamma-tubulin at the first position is blocked by TUBGCP3 at the last position, allowing 13 protafilaments to grow into a microtubule. The gTuRC (via TUBGCP3 and TUBGCP6) interacts with ACTB and MZT1; the interactions form a luminal bridge that stabilizes the initial structure during complex assembly. The gTuRC (via TUBGCP2) interacts with MZT2A/MZT2B and CDK5RAP2 (via CM1 motif); the interactions play a role in gTuRC activation. Interacts with ATF5; the ATF5:PCNT:polyglutamylated tubulin (PGT) tripartite unites the mother centriole and the pericentriolar material (PCM) in the centrosome.

The protein resides in the cytoplasm. Its subcellular location is the cytoskeleton. The protein localises to the microtubule organizing center. It is found in the centrosome. Component of the gamma-tubulin ring complex (gTuRC) which mediates microtubule nucleation. The gTuRC regulates the minus-end nucleation of alpha-beta tubulin heterodimers that grow into microtubule protafilaments, a critical step in centrosome duplication and spindle formation. Plays a role in neuronal migration. The chain is Gamma-tubulin complex component 2 (TUBGCP2) from Pongo abelii (Sumatran orangutan).